The chain runs to 343 residues: Protein rax1 (343 aa).

Topologically, residues 1 to 235 (MASAPRVSEV…NLNPLTCTGR (235 aa)) are cytoplasmic. Residues 109 to 228 (ELSNEQTINS…LNHKFKHNLN (120 aa)) form the RGS domain. The helical transmembrane segment at 236–256 (FIIGYVSTFAAYWLGFCGIFL) threads the bilayer. The Extracellular portion of the chain corresponds to 257 to 263 (DYSRRKR). A helical transmembrane segment spans residues 264–284 (VWTLLPFAFGFYNLICTWSKH). Residues 285 to 317 (DPVLALLGYSEVKPFHYEKVLQPSIRLSLNRRA) are Cytoplasmic-facing. A helical membrane pass occupies residues 318–338 (IFVLSIIVLIVGANTAIFSCV). Residues 339–343 (PSIRL) are Extracellular-facing.

It localises to the cell membrane. It is found in the endoplasmic reticulum membrane. In terms of biological role, may be involved in cell polarization and division. This chain is Protein rax1 (rax1), found in Schizosaccharomyces pombe (strain 972 / ATCC 24843) (Fission yeast).